The chain runs to 491 residues: MTDLTSLTLAEARDGLARKSFTALELTDAHLAAMERARVLNAYVLETPERAREMARQADGRIAKSEGGPLNGLPLGVKDLFATEGTRTTACSRILGDFKPPYESTVTSQLWRDGAVMLGKLNNDEFAMGSSNETSCFGPVINPWRRQGSDVRLVPGGSSGGSASAVAAGICLGATATDTGGSIRQPAAFTGTVGLKPTYGRCSRWGTVAFASSLDQAGPIARTVRDAAILLRSMAGHDPKDTTSVDRAVPDYEAAVGRSVKGMKIGLPREYRLDGMPAEIEKLWSQGADWLKAAGAELVEVSLPHTKYALPAYYIVAPAEASSNLARYDGVRYGARADGSNIVEMYENTRAKGFGAEVRRRIMIGTYVLSAGYYDAYYLRAQKVRTLIKKDFEDCYEAGVDAILTPATPSAAFGIGEKTDSDPIEMYLNDIFTVTANMAGLPGIAVPAGRDAQGLPLGLQLIGRPFDEEAVISLGEVIEQAAGRFTPEVWW.

Catalysis depends on charge relay system residues lysine 78 and serine 158. The active-site Acyl-ester intermediate is the serine 182.

Belongs to the amidase family. GatA subfamily. As to quaternary structure, heterotrimer of A, B and C subunits.

It catalyses the reaction L-glutamyl-tRNA(Gln) + L-glutamine + ATP + H2O = L-glutaminyl-tRNA(Gln) + L-glutamate + ADP + phosphate + H(+). Functionally, allows the formation of correctly charged Gln-tRNA(Gln) through the transamidation of misacylated Glu-tRNA(Gln) in organisms which lack glutaminyl-tRNA synthetase. The reaction takes place in the presence of glutamine and ATP through an activated gamma-phospho-Glu-tRNA(Gln). The polypeptide is Glutamyl-tRNA(Gln) amidotransferase subunit A (Nitrobacter winogradskyi (strain ATCC 25391 / DSM 10237 / CIP 104748 / NCIMB 11846 / Nb-255)).